Reading from the N-terminus, the 255-residue chain is Ribonuclease PH (255 aa).

Phosphate is bound by residues R86 and 124–126 (GTR).

It belongs to the RNase PH family. As to quaternary structure, homohexameric ring arranged as a trimer of dimers.

The catalysed reaction is tRNA(n+1) + phosphate = tRNA(n) + a ribonucleoside 5'-diphosphate. Functionally, phosphorolytic 3'-5' exoribonuclease that plays an important role in tRNA 3'-end maturation. Removes nucleotide residues following the 3'-CCA terminus of tRNAs; can also add nucleotides to the ends of RNA molecules by using nucleoside diphosphates as substrates, but this may not be physiologically important. Probably plays a role in initiation of 16S rRNA degradation (leading to ribosome degradation) during starvation. This Aquifex aeolicus (strain VF5) protein is Ribonuclease PH.